We begin with the raw amino-acid sequence, 208 residues long: MKPLTARQQEVFDLIKAKIDDTGMPPTRAEIARELGFRSANAAEEHLKALARKQVIEIIPGASRGIRILLQDADHHDEELGVPLIGQVAAGEPILAQEHVESHYKVDPGMFKPQADFLLRVNGESMKDIGIMDGDLLAVHKTQDVRDGQVVVARVDDDVTVKRLERKGSMVFLHAENEEFSPIEVDLTSQSLSIEGLAVGVIRSTTWM.

Positions 28-48 (RAEIARELGFRSANAAEEHLK) form a DNA-binding region, H-T-H motif. Residues Ser125 and Lys162 each act as for autocatalytic cleavage activity in the active site.

It belongs to the peptidase S24 family. In terms of assembly, homodimer.

It carries out the reaction Hydrolysis of Ala-|-Gly bond in repressor LexA.. In terms of biological role, represses a number of genes involved in the response to DNA damage (SOS response), including recA and lexA. In the presence of single-stranded DNA, RecA interacts with LexA causing an autocatalytic cleavage which disrupts the DNA-binding part of LexA, leading to derepression of the SOS regulon and eventually DNA repair. The protein is LexA repressor of Aliivibrio fischeri (strain ATCC 700601 / ES114) (Vibrio fischeri).